A 547-amino-acid polypeptide reads, in one-letter code: CTP synthase (547 aa).

An amidoligase domain region spans residues 1-265 (MARYVFITGG…DQAVLDAFGI (265 aa)). Position 13 (Ser13) interacts with CTP. Ser13 is a UTP binding site. Residues 14–19 (SLGKGL) and Asp71 contribute to the ATP site. The Mg(2+) site is built by Asp71 and Glu139. CTP-binding positions include 146-148 (DIE), 186-191 (KTKPTQ), and Lys222. UTP contacts are provided by residues 186-191 (KTKPTQ) and Lys222. In terms of domain architecture, Glutamine amidotransferase type-1 spans 291–546 (RVAIVGKYTQ…VRAAVEVSRL (256 aa)). Gly353 lines the L-glutamine pocket. The active-site Nucleophile; for glutamine hydrolysis is Cys380. L-glutamine contacts are provided by residues 381–384 (LGMQ), Glu404, and Arg474. Residues His519 and Glu521 contribute to the active site.

The protein belongs to the CTP synthase family. As to quaternary structure, homotetramer.

The enzyme catalyses UTP + L-glutamine + ATP + H2O = CTP + L-glutamate + ADP + phosphate + 2 H(+). The catalysed reaction is L-glutamine + H2O = L-glutamate + NH4(+). It carries out the reaction UTP + NH4(+) + ATP = CTP + ADP + phosphate + 2 H(+). It functions in the pathway pyrimidine metabolism; CTP biosynthesis via de novo pathway; CTP from UDP: step 2/2. With respect to regulation, allosterically activated by GTP, when glutamine is the substrate; GTP has no effect on the reaction when ammonia is the substrate. The allosteric effector GTP functions by stabilizing the protein conformation that binds the tetrahedral intermediate(s) formed during glutamine hydrolysis. Inhibited by the product CTP, via allosteric rather than competitive inhibition. Functionally, catalyzes the ATP-dependent amination of UTP to CTP with either L-glutamine or ammonia as the source of nitrogen. Regulates intracellular CTP levels through interactions with the four ribonucleotide triphosphates. This chain is CTP synthase, found in Cereibacter sphaeroides (strain ATCC 17029 / ATH 2.4.9) (Rhodobacter sphaeroides).